The following is a 258-amino-acid chain: Imidazole glycerol phosphate synthase subunit HisF (258 aa).

Catalysis depends on residues D11 and D130.

It belongs to the HisA/HisF family. Heterodimer of HisH and HisF.

The protein localises to the cytoplasm. The catalysed reaction is 5-[(5-phospho-1-deoxy-D-ribulos-1-ylimino)methylamino]-1-(5-phospho-beta-D-ribosyl)imidazole-4-carboxamide + L-glutamine = D-erythro-1-(imidazol-4-yl)glycerol 3-phosphate + 5-amino-1-(5-phospho-beta-D-ribosyl)imidazole-4-carboxamide + L-glutamate + H(+). It functions in the pathway amino-acid biosynthesis; L-histidine biosynthesis; L-histidine from 5-phospho-alpha-D-ribose 1-diphosphate: step 5/9. IGPS catalyzes the conversion of PRFAR and glutamine to IGP, AICAR and glutamate. The HisF subunit catalyzes the cyclization activity that produces IGP and AICAR from PRFAR using the ammonia provided by the HisH subunit. The chain is Imidazole glycerol phosphate synthase subunit HisF from Escherichia coli O6:K15:H31 (strain 536 / UPEC).